The chain runs to 140 residues: Probable transport accessory protein MmpS4 (140 aa).

The helical transmembrane segment at 2 to 22 threads the bilayer; it reads LMRTWIPLVILVVVIVGGFTV.

Belongs to the MmpS family.

The protein localises to the cell membrane. The polypeptide is Probable transport accessory protein MmpS4 (mmpS4) (Mycobacterium bovis (strain ATCC BAA-935 / AF2122/97)).